A 639-amino-acid polypeptide reads, in one-letter code: MKIINLGILAHVDAGKTTLTESLLYTSGAIAEPGSVDKGTTRTDTMNLERQRGITIQTAVTSFQWEDVKVNIIDTPGHMDFLAEVYRSLSVLDGAVLLVSAKDGIQAQTRILFHALQTMKIPTIFFINKIDQEGIDLPMVYREMKAKLSSEIIVKQKVGQHPHINVTDNDDMEQWDTVIMGNDELLEKYMSGKPFKMSELEQEENRRFQNGTLFPVYHGSAKNNLGIRQLIEVIASKFYSSTPEGQSELCGQVFKIEYSEKRRRFVYVRIYSGTLHLRDVIRISEKEKIKITEMCVPTNGELYSSDTACSGDIVILPNDVLQLNSILGNEILLPQRKFIENPLPMLQTTIAVKKSEQREILLGALTEISDGDPLLKYYVDTTTHEIILSFLGNVQMEVICAILEEKYHVEAEIKEPTVIYMERPLRKAEYTIHIEVPPNPFWASVGLSIEPLPIGSGVQYESRVSLGYLNQSFQNAVMEGVLYGCEQGLYGWKVTDCKICFEYGLYYSPVSTPADFRLLSPIVLEQALKKAGTELLEPYLHFEIYAPQEYLSRAYHDAPRYCADIVSTQIKNDEVILKGEIPARCIQEYRNDLTYFTNGQGVCLTELKGYQPAIGKFICQPRRPNSRIDKVRHMFHKLA.

Residues 1–244 (MKIINLGILA…ASKFYSSTPE (244 aa)) enclose the tr-type G domain. GTP contacts are provided by residues 10–17 (AHVDAGKT), 74–78 (DTPGH), and 128–131 (NKID).

It belongs to the TRAFAC class translation factor GTPase superfamily. Classic translation factor GTPase family. TetM/TetO subfamily.

Abolishes the inhibitory effect of tetracyclin on protein synthesis by a non-covalent modification of the ribosomes. The chain is Tetracycline resistance protein TetO (tetO) from Streptococcus mutans.